The following is a 553-amino-acid chain: Phenylalanine--tRNA ligase alpha subunit (553 aa).

Positions 400 and 479 each coordinate L-phenylalanine. Residue E481 coordinates Mg(2+).

The protein belongs to the class-II aminoacyl-tRNA synthetase family. Phe-tRNA synthetase alpha subunit type 2 subfamily. As to quaternary structure, tetramer of two alpha and two beta subunits. Mg(2+) is required as a cofactor.

The protein localises to the cytoplasm. It carries out the reaction tRNA(Phe) + L-phenylalanine + ATP = L-phenylalanyl-tRNA(Phe) + AMP + diphosphate + H(+). The polypeptide is Phenylalanine--tRNA ligase alpha subunit (Treponema pallidum (strain Nichols)).